Here is a 376-residue protein sequence, read N- to C-terminus: Erythronate-4-phosphate dehydrogenase (376 aa).

Substrate contacts are provided by serine 45 and threonine 67. NAD(+) is bound at residue aspartate 147. The active site involves arginine 209. Position 233 (aspartate 233) interacts with NAD(+). Glutamate 238 is a catalytic residue. Residue histidine 255 is the Proton donor of the active site. Glycine 258 contacts NAD(+). Tyrosine 259 contacts substrate.

It belongs to the D-isomer specific 2-hydroxyacid dehydrogenase family. PdxB subfamily. In terms of assembly, homodimer.

The protein localises to the cytoplasm. The enzyme catalyses 4-phospho-D-erythronate + NAD(+) = (R)-3-hydroxy-2-oxo-4-phosphooxybutanoate + NADH + H(+). Its pathway is cofactor biosynthesis; pyridoxine 5'-phosphate biosynthesis; pyridoxine 5'-phosphate from D-erythrose 4-phosphate: step 2/5. In terms of biological role, catalyzes the oxidation of erythronate-4-phosphate to 3-hydroxy-2-oxo-4-phosphonooxybutanoate. The sequence is that of Erythronate-4-phosphate dehydrogenase from Shewanella baltica (strain OS195).